The sequence spans 221 residues: Adenylate kinase (221 aa).

Position 10–15 (10–15 (GAGKGT)) interacts with ATP. The NMP stretch occupies residues 30 to 59 (STGDMLRAAVKARTELGVAAKKIMDAGGLV). AMP is bound by residues Thr-31, Arg-36, 57 to 59 (GLV), 85 to 88 (GFPR), and Gln-92. Residues 122 to 159 (GRRVHLASGRTYHIKFNPPKVEGKDDITGDPLIQRDDD) form an LID region. ATP is bound by residues Arg-123 and 132 to 133 (TY). Positions 156 and 167 each coordinate AMP. Ser-207 contacts ATP.

It belongs to the adenylate kinase family. As to quaternary structure, monomer.

It localises to the cytoplasm. It carries out the reaction AMP + ATP = 2 ADP. It functions in the pathway purine metabolism; AMP biosynthesis via salvage pathway; AMP from ADP: step 1/1. Catalyzes the reversible transfer of the terminal phosphate group between ATP and AMP. Plays an important role in cellular energy homeostasis and in adenine nucleotide metabolism. The sequence is that of Adenylate kinase from Polynucleobacter necessarius subsp. necessarius (strain STIR1).